We begin with the raw amino-acid sequence, 307 residues long: D-alanine--D-alanine ligase (307 aa).

Residues 105–304 form the ATP-grasp domain; the sequence is KMLWKGFGLP…FEKLVEKILE (200 aa). 135–190 lines the ATP pocket; sequence VARLGLPLMVKPSREGSSVGLTKVDSADKLKSAVDLALKFDDIVLIEEWLSGDELT. Mg(2+) contacts are provided by Asp258, Glu271, and Asn273.

This sequence belongs to the D-alanine--D-alanine ligase family. Mg(2+) is required as a cofactor. The cofactor is Mn(2+).

The protein resides in the cytoplasm. The catalysed reaction is 2 D-alanine + ATP = D-alanyl-D-alanine + ADP + phosphate + H(+). It participates in cell wall biogenesis; peptidoglycan biosynthesis. Functionally, cell wall formation. The protein is D-alanine--D-alanine ligase of Actinobacillus succinogenes (strain ATCC 55618 / DSM 22257 / CCUG 43843 / 130Z).